A 280-amino-acid chain; its full sequence is 2-dehydro-3-deoxyphosphooctonate aldolase (280 aa).

The protein belongs to the KdsA family.

The protein localises to the cytoplasm. It catalyses the reaction D-arabinose 5-phosphate + phosphoenolpyruvate + H2O = 3-deoxy-alpha-D-manno-2-octulosonate-8-phosphate + phosphate. The protein operates within carbohydrate biosynthesis; 3-deoxy-D-manno-octulosonate biosynthesis; 3-deoxy-D-manno-octulosonate from D-ribulose 5-phosphate: step 2/3. It functions in the pathway bacterial outer membrane biogenesis; lipopolysaccharide biosynthesis. This is 2-dehydro-3-deoxyphosphooctonate aldolase from Thiobacillus denitrificans (strain ATCC 25259 / T1).